Here is an 853-residue protein sequence, read N- to C-terminus: MRVKEIRKNWQHLRGGILLLGMLMICSAAKEKTWVTIYYGVPVWREATTTLFCASDAKAYDTEVHNVWATHACVPTDPNPQEVVLGNVTENFNMWKNNMVDQMHEDIISLWDESLKPCVKLTPLCVTLNCTNLNITKNTTNPTSSSWGMMEKGEIKNCSFYITTSIRNKVKKEYALFNRLDVVPIENTNNTKYRLISCNTSVITQACPKVSFQPIPIHYCVPAGFAMLKCNNKTFNGSGPCTNVSTVQCTHGIRPVVSTQLLLNGSLAEEDIVIRSENFTDNAKTIIVQLNESVVINCTRPNNNTRRRLSIGPGRAFYARRNIIGDIRQAHCNISRAKWNNTLQQIVIKLREKFRNKTIAFNQSSGGDPEIVMHSFNCGGEFFYCNTAQLFNSTWNVTGGTNGTEGNDIITLQCRIKQIINMWQKVGKAMYAPPITGQIRCSSNITGLLLTRDGGNSTETETEIFRPGGGDMRDNWRSELYKYKVVRIEPIGVAPTRAKRRTVQREKRAVGIGAVFLGFLGAAGSTMGAASVTLTVQARLLLSGIVQQQNNLLRAIEAQQHMLQLTVWGIKQLQARVLALERYLRDQQLMGIWGCSGKLICTTSVPWNVSWSNKSVDDIWNNMTWMEWEREIDNYTDYIYDLLEKSQTQQEKNEKELLELDKWASLWNWFDITNWLWYIRLFIMIVGGLIGLRIVFAVLSIVNRVRQGYSPLSFQTLLPASRGPDRPEGTEEEGGERDRDRSGPLVNGFLALFWVDLRNLCLFLYHLLRNLLLIVTRIVELLGRRGWEALKYWWNLLQYWSQELKNSAVSLLNATAIAVAEGTDRVIKIVQRACRAIRNIPTRIRQGLERALL.

Positions 1 to 31 (MRVKEIRKNWQHLRGGILLLGMLMICSAAKE) are cleaved as a signal peptide. Over 32–681 (KTWVTIYYGV…ITNWLWYIRL (650 aa)) the chain is Extracellular. A disulfide bond links Cys-53 and Cys-73. Residues Asn-87, Asn-129, Asn-134, Asn-138, Asn-157, Asn-189, Asn-199, Asn-232, Asn-236, Asn-243, Asn-264, Asn-278, Asn-291, Asn-297, Asn-303, Asn-333, Asn-340, Asn-356, and Asn-362 are each glycosylated (N-linked (GlcNAc...) asparagine; by host). 5 disulfide bridges follow: Cys-118–Cys-207, Cys-125–Cys-198, Cys-130–Cys-158, Cys-220–Cys-249, and Cys-230–Cys-241. A V1 region spans residues 130 to 157 (CTNLNITKNTTNPTSSSWGMMEKGEIKN). A V2 region spans residues 158–198 (CSFYITTSIRNKVKKEYALFNRLDVVPIENTNNTKYRLISC). The tract at residues 298-331 (CTRPNNNTRRRLSIGPGRAFYARRNIIGDIRQAH) is V3. Cys-298 and Cys-332 form a disulfide bridge. A CD4-binding loop region spans residues 364–374 (SSGGDPEIVMH). 2 cysteine pairs are disulfide-bonded: Cys-378-Cys-441 and Cys-385-Cys-414. The segment at 385–414 (CNTAQLFNSTWNVTGGTNGTEGNDIITLQC) is V4. 5 N-linked (GlcNAc...) asparagine; by host glycosylation sites follow: Asn-392, Asn-396, Asn-402, Asn-444, and Asn-456. The segment at 459 to 468 (ETETEIFRPG) is V5. Positions 509-529 (AVGIGAVFLGFLGAAGSTMGA) are fusion peptide. The immunosuppression stretch occupies residues 571–589 (KQLQARVLALERYLRDQQL). Cys-595 and Cys-601 are joined by a disulfide. 4 N-linked (GlcNAc...) asparagine; by host glycosylation sites follow: Asn-608, Asn-613, Asn-622, and Asn-634. Positions 630 to 664 (REIDNYTDYIYDLLEKSQTQQEKNEKELLELDKWA) form a coiled coil. The segment at 659-680 (ELDKWASLWNWFDITNWLWYIR) is MPER; binding to GalCer. A helical membrane pass occupies residues 682–702 (FIMIVGGLIGLRIVFAVLSIV). At 703–853 (NRVRQGYSPL…IRQGLERALL (151 aa)) the chain is on the cytoplasmic side. The YXXL motif; contains endocytosis signal signature appears at 709 to 712 (YSPL). A disordered region spans residues 718-740 (LPASRGPDRPEGTEEEGGERDRD). S-palmitoyl cysteine; by host attachment occurs at residues Cys-761 and Cys-834. Positions 852-853 (LL) match the Di-leucine internalization motif motif.

It belongs to the HIV-1 env protein family. The mature envelope protein (Env) consists of a homotrimer of non-covalently associated gp120-gp41 heterodimers. The resulting complex protrudes from the virus surface as a spike. There seems to be as few as 10 spikes on the average virion. Interacts with host CD4, CCR5 and CXCR4. Gp120 also interacts with the C-type lectins CD209/DC-SIGN and CLEC4M/DC-SIGNR (collectively referred to as DC-SIGN(R)). Gp120 and gp41 interact with GalCer. Gp120 interacts with host ITGA4/ITGB7 complex; on CD4+ T-cells, this interaction results in rapid activation of integrin ITGAL/LFA-1, which facilitates efficient cell-to-cell spreading of HIV-1. Gp120 interacts with cell-associated heparan sulfate; this interaction increases virus infectivity on permissive cells and may be involved in infection of CD4- cells. As to quaternary structure, the mature envelope protein (Env) consists of a homotrimer of non-covalently associated gp120-gp41 heterodimers. The resulting complex protrudes from the virus surface as a spike. There seems to be as few as 10 spikes on the average virion. Post-translationally, highly glycosylated by host. The high number of glycan on the protein is reffered to as 'glycan shield' because it contributes to hide protein sequence from adaptive immune system. In terms of processing, palmitoylation of the transmembrane protein and of Env polyprotein (prior to its proteolytic cleavage) is essential for their association with host cell membrane lipid rafts. Palmitoylation is therefore required for envelope trafficking to classical lipid rafts, but not for viral replication. Specific enzymatic cleavages in vivo yield mature proteins. Envelope glycoproteins are synthesized as an inactive precursor that is heavily N-glycosylated and processed likely by host cell furin in the Golgi to yield the mature SU and TM proteins. The cleavage site between SU and TM requires the minimal sequence [KR]-X-[KR]-R. About 2 of the 9 disulfide bonds of gp41 are reduced by P4HB/PDI, following binding to CD4 receptor.

The protein resides in the virion membrane. Its subcellular location is the host cell membrane. The protein localises to the host endosome membrane. In terms of biological role, oligomerizes in the host endoplasmic reticulum into predominantly trimers. In a second time, gp160 transits in the host Golgi, where glycosylation is completed. The precursor is then proteolytically cleaved in the trans-Golgi and thereby activated by cellular furin or furin-like proteases to produce gp120 and gp41. Functionally, attaches the virus to the host lymphoid cell by binding to the primary receptor CD4. This interaction induces a structural rearrangement creating a high affinity binding site for a chemokine coreceptor like CXCR4 and/or CCR5. Acts as a ligand for CD209/DC-SIGN and CLEC4M/DC-SIGNR, which are respectively found on dendritic cells (DCs), and on endothelial cells of liver sinusoids and lymph node sinuses. These interactions allow capture of viral particles at mucosal surfaces by these cells and subsequent transmission to permissive cells. HIV subverts the migration properties of dendritic cells to gain access to CD4+ T-cells in lymph nodes. Virus transmission to permissive T-cells occurs either in trans (without DCs infection, through viral capture and transmission), or in cis (following DCs productive infection, through the usual CD4-gp120 interaction), thereby inducing a robust infection. In trans infection, bound virions remain infectious over days and it is proposed that they are not degraded, but protected in non-lysosomal acidic organelles within the DCs close to the cell membrane thus contributing to the viral infectious potential during DCs' migration from the periphery to the lymphoid tissues. On arrival at lymphoid tissues, intact virions recycle back to DCs' cell surface allowing virus transmission to CD4+ T-cells. Acts as a class I viral fusion protein. Under the current model, the protein has at least 3 conformational states: pre-fusion native state, pre-hairpin intermediate state, and post-fusion hairpin state. During fusion of viral and target intracellular membranes, the coiled coil regions (heptad repeats) assume a trimer-of-hairpins structure, positioning the fusion peptide in close proximity to the C-terminal region of the ectodomain. The formation of this structure appears to drive apposition and subsequent fusion of viral and target cell membranes. Complete fusion occurs in host cell endosomes and is dynamin-dependent, however some lipid transfer might occur at the plasma membrane. The virus undergoes clathrin-dependent internalization long before endosomal fusion, thus minimizing the surface exposure of conserved viral epitopes during fusion and reducing the efficacy of inhibitors targeting these epitopes. Membranes fusion leads to delivery of the nucleocapsid into the cytoplasm. The chain is Envelope glycoprotein gp160 from Human immunodeficiency virus type 1 group M subtype B (strain 89.6) (HIV-1).